A 170-amino-acid chain; its full sequence is Lipoprotein signal peptidase (170 aa).

3 consecutive transmembrane segments (helical) span residues 13–33 (IFIS…VKYI), 72–92 (LFFL…ALKE), and 96–113 (IARI…GNII). Residues Asp124 and Asp146 contribute to the active site. A helical membrane pass occupies residues 142–162 (FNFADSYVVIGITLFIIYDLF).

Belongs to the peptidase A8 family.

Its subcellular location is the cell inner membrane. It carries out the reaction Release of signal peptides from bacterial membrane prolipoproteins. Hydrolyzes -Xaa-Yaa-Zaa-|-(S,diacylglyceryl)Cys-, in which Xaa is hydrophobic (preferably Leu), and Yaa (Ala or Ser) and Zaa (Gly or Ala) have small, neutral side chains.. The protein operates within protein modification; lipoprotein biosynthesis (signal peptide cleavage). In terms of biological role, this protein specifically catalyzes the removal of signal peptides from prolipoproteins. The chain is Lipoprotein signal peptidase from Borrelia turicatae (strain 91E135).